The primary structure comprises 345 residues: Uroporphyrinogen decarboxylase (345 aa).

Residues 30–34 (RQAGR), D79, Y154, S209, and H322 each bind substrate.

It belongs to the uroporphyrinogen decarboxylase family. As to quaternary structure, homodimer.

The protein localises to the cytoplasm. It catalyses the reaction uroporphyrinogen III + 4 H(+) = coproporphyrinogen III + 4 CO2. It participates in porphyrin-containing compound metabolism; protoporphyrin-IX biosynthesis; coproporphyrinogen-III from 5-aminolevulinate: step 4/4. Catalyzes the decarboxylation of four acetate groups of uroporphyrinogen-III to yield coproporphyrinogen-III. This Nocardioides sp. (strain ATCC BAA-499 / JS614) protein is Uroporphyrinogen decarboxylase.